A 200-amino-acid chain; its full sequence is Recombination protein RecR (200 aa).

The C4-type zinc finger occupies 58–73 (CSLCCNLTDEDPCSIC). The Toprim domain occupies 81–176 (NLLCVVEEPR…KVTRIAHGIP (96 aa)).

This sequence belongs to the RecR family.

Functionally, may play a role in DNA repair. It seems to be involved in an RecBC-independent recombinational process of DNA repair. It may act with RecF and RecO. This Desulforamulus reducens (strain ATCC BAA-1160 / DSM 100696 / MI-1) (Desulfotomaculum reducens) protein is Recombination protein RecR.